A 480-amino-acid polypeptide reads, in one-letter code: Probable ATP-dependent RNA helicase DDX49 (480 aa).

The Q motif motif lies at 2 to 30; it reads AGFAEIGLSSWLVEQCRQLGLKQPTPVQL. The region spanning 33-207 is the Helicase ATP-binding domain; it reads IPAILEGRDC…GLATNEPFFW (175 aa). 46-53 contacts ATP; it reads AKTGSGKT. The DEAD box motif lies at 152–155; sequence DEAD. Residues 218–382 form the Helicase C-terminal domain; it reads QLDQRYLLVP…ELVVEEAEVL (165 aa). The tract at residues 438–480 is disordered; it reads QQNRRFKEKVGQTLRRQKAGSTVRRSRPPRSRPQEPAQAEAQD.

It belongs to the DEAD box helicase family. DDX49/DBP8 subfamily.

It is found in the nucleus. The protein localises to the nucleolus. It catalyses the reaction ATP + H2O = ADP + phosphate + H(+). ATP-dependent RNA helicase that plays a role in various aspects of RNA metabolism including the regulation of mRNA export and the levels of pre-ribosomal RNA. Regulates the stability and synthesis of pre-ribosomal RNA and thereby regulates cell proliferation. Also possesses antiviral activity by recognizing gammaherpesvirus transcripts in the context of lytic reactivation. The polypeptide is Probable ATP-dependent RNA helicase DDX49 (Ddx49) (Mus musculus (Mouse)).